We begin with the raw amino-acid sequence, 338 residues long: Glycerol-3-phosphate dehydrogenase [NAD(P)+] (338 aa).

3 residues coordinate NADPH: serine 13, tryptophan 14, and lysine 108. Sn-glycerol 3-phosphate is bound by residues lysine 108, glycine 139, and serine 141. Alanine 143 lines the NADPH pocket. Sn-glycerol 3-phosphate contacts are provided by lysine 194, aspartate 247, serine 257, arginine 258, and asparagine 259. Residue lysine 194 is the Proton acceptor of the active site. Arginine 258 contacts NADPH. Residues valine 282 and glutamate 284 each coordinate NADPH.

The protein belongs to the NAD-dependent glycerol-3-phosphate dehydrogenase family.

Its subcellular location is the cytoplasm. The enzyme catalyses sn-glycerol 3-phosphate + NAD(+) = dihydroxyacetone phosphate + NADH + H(+). The catalysed reaction is sn-glycerol 3-phosphate + NADP(+) = dihydroxyacetone phosphate + NADPH + H(+). It functions in the pathway membrane lipid metabolism; glycerophospholipid metabolism. In terms of biological role, catalyzes the reduction of the glycolytic intermediate dihydroxyacetone phosphate (DHAP) to sn-glycerol 3-phosphate (G3P), the key precursor for phospholipid synthesis. In Streptococcus pneumoniae (strain CGSP14), this protein is Glycerol-3-phosphate dehydrogenase [NAD(P)+].